Consider the following 109-residue polypeptide: FAD assembly factor SdhE (109 aa).

The disordered stretch occupies residues 1–22; sequence MQDNFTASSPSSSSSASGVAED. Low complexity predominate over residues 7–17; sequence ASSPSSSSSAS.

This sequence belongs to the SdhE FAD assembly factor family.

The protein localises to the cytoplasm. An FAD assembly protein, which accelerates covalent attachment of the cofactor into other proteins. Plays an essential role in the assembly of succinate dehydrogenase (SDH, respiratory complex II), an enzyme complex that is a component of both the tricarboxylic acid cycle and the electron transport chain, and which couples the oxidation of succinate to fumarate with the reduction of ubiquinone (coenzyme Q) to ubiquinol. Required for flavinylation of SdhA, when the SDH operon and this gene are overexpressed in G.oxydans. Flavinylation of SdhA is detected only in the presence of sdhE. The chain is FAD assembly factor SdhE from Acetobacter pasteurianus (strain NBRC 105184 / IFO 3283-01).